A 252-amino-acid polypeptide reads, in one-letter code: Imidazole glycerol phosphate synthase subunit HisF (252 aa).

Active-site residues include Asp-11 and Asp-130.

This sequence belongs to the HisA/HisF family. Heterodimer of HisH and HisF.

Its subcellular location is the cytoplasm. It carries out the reaction 5-[(5-phospho-1-deoxy-D-ribulos-1-ylimino)methylamino]-1-(5-phospho-beta-D-ribosyl)imidazole-4-carboxamide + L-glutamine = D-erythro-1-(imidazol-4-yl)glycerol 3-phosphate + 5-amino-1-(5-phospho-beta-D-ribosyl)imidazole-4-carboxamide + L-glutamate + H(+). It participates in amino-acid biosynthesis; L-histidine biosynthesis; L-histidine from 5-phospho-alpha-D-ribose 1-diphosphate: step 5/9. Functionally, IGPS catalyzes the conversion of PRFAR and glutamine to IGP, AICAR and glutamate. The HisF subunit catalyzes the cyclization activity that produces IGP and AICAR from PRFAR using the ammonia provided by the HisH subunit. This is Imidazole glycerol phosphate synthase subunit HisF from Thermococcus gammatolerans (strain DSM 15229 / JCM 11827 / EJ3).